Here is a 316-residue protein sequence, read N- to C-terminus: L-lactate dehydrogenase (316 aa).

NAD(+)-binding positions include valine 15, aspartate 36, arginine 41, tyrosine 66, and 80–81; that span reads GA. Substrate contacts are provided by residues glutamine 83, arginine 90, and 122–125; that span reads NPVD. Residues 120-122 and threonine 145 each bind NAD(+); that span reads ATN. 150 to 153 contributes to the substrate binding site; it reads DTAR. Residues arginine 155 and histidine 170 each coordinate beta-D-fructose 1,6-bisphosphate. Histidine 177 (proton acceptor) is an active-site residue. At tyrosine 222 the chain carries Phosphotyrosine. Residue threonine 231 coordinates substrate. Positions 287–316 are disordered; the sequence is DPGLSDEEREALRDSARALRDSRADLTVGT. The span at 296 to 310 shows a compositional bias: basic and acidic residues; it reads EALRDSARALRDSRA.

The protein belongs to the LDH/MDH superfamily. LDH family. In terms of assembly, homotetramer.

It localises to the cytoplasm. It carries out the reaction (S)-lactate + NAD(+) = pyruvate + NADH + H(+). It functions in the pathway fermentation; pyruvate fermentation to lactate; (S)-lactate from pyruvate: step 1/1. Allosterically activated by fructose 1,6-bisphosphate (FBP). In terms of biological role, catalyzes the conversion of lactate to pyruvate. The protein is L-lactate dehydrogenase of Salinibacter ruber (strain DSM 13855 / M31).